The following is a 24-amino-acid chain: Sperm protamine P3 (24 aa).

The tract at residues 1–24 (RRRRRRRRHRRRRGRRGRRSRGRR) is disordered.

In terms of tissue distribution, testis.

It is found in the nucleus. The protein resides in the chromosome. Protamines substitute for histones in the chromatin of sperm during the haploid phase of spermatogenesis. They compact sperm DNA into a highly condensed, stable and inactive complex. The chain is Sperm protamine P3 from Octopus vulgaris (Common octopus).